We begin with the raw amino-acid sequence, 390 residues long: Peroxisomal sarcosine oxidase (390 aa).

Position 9-39 (9-39 (DAIVIGAGIQGCFTAYHLAKHRKRILLLEQF)) interacts with FAD. K126 is modified (N6-acetyllysine). The residue at position 319 (C319) is an S-8alpha-FAD cysteine. A Microbody targeting signal motif is present at residues 388–390 (AHL).

Belongs to the MSOX/MTOX family. FAD serves as cofactor. As to expression, expressed in the liver and kidney.

It is found in the peroxisome. The catalysed reaction is sarcosine + O2 + H2O = formaldehyde + glycine + H2O2. It carries out the reaction L-pipecolate + O2 = L-1-piperideine-6-carboxylate + H2O2 + H(+). Its function is as follows. Metabolizes sarcosine and L-pipecolic acid. The protein is Peroxisomal sarcosine oxidase (PIPOX) of Homo sapiens (Human).